We begin with the raw amino-acid sequence, 1694 residues long: Immunoglobulin A1 protease autotransporter (1694 aa).

The signal sequence occupies residues 1–25 (MLNKKFKLNFIALTVAYALTPYTEA). A Peptidase S6 domain is found at 26 to 332 (ALVRDDVDYQ…NIYKPEFAKT (307 aa)). Residue serine 288 is part of the active site. The disordered stretch occupies residues 991–1403 (VEKRNQTVDT…GSDRSTVALR (413 aa)). Polar residues predominate over residues 997–1021 (TVDTTNITTPNNIQADVPSVPSNNE). Positions 1037-1047 (TPSETTETVAE) are enriched in low complexity. The span at 1049–1061 (SKQESKTVEKNEQ) shows a compositional bias: basic and acidic residues. Positions 1082–1095 (KANTQTNEVAQSGS) are enriched in polar residues. 2 stretches are compositionally biased toward basic and acidic residues: residues 1104–1124 (EIKE…KDEI) and 1142–1154 (APKE…KVEE). Polar residues-rich tracts occupy residues 1155 to 1178 (TQVQ…SPNS) and 1199 to 1210 (VSKNQTENTTDQ). Residues 1211–1226 (PTEREKTAKVETEKTQ) show a composition bias toward basic and acidic residues. Polar residues-rich tracts occupy residues 1227–1247 (EPPQ…TVQP), 1255–1297 (NVPT…TAIT), and 1308–1336 (TETA…NSES). Residues 1352 to 1370 (ETSAEETTAASTDETTIAD) show a composition bias toward low complexity. Basic residues predominate over residues 1374–1384 (RSKPNRRSRRS). One can recognise an Autotransporter domain in the interval 1442 to 1694 (NNEGQYNVWV…TAELKLSFSF (253 aa)).

The protein resides in the periplasm. It localises to the secreted. The protein localises to the cell surface. It is found in the cell outer membrane. The catalysed reaction is Cleavage of immunoglobulin A molecules at certain Pro-|-Xaa bonds in the hinge region. No small molecule substrates are known.. Virulence factor; cleaves host immunoglobulin A producing intact Fc and Fab fragments. This chain is Immunoglobulin A1 protease autotransporter (iga), found in Haemophilus influenzae (strain ATCC 51907 / DSM 11121 / KW20 / Rd).